The primary structure comprises 174 residues: Large ribosomal subunit protein uL10 (174 aa).

This sequence belongs to the universal ribosomal protein uL10 family. In terms of assembly, part of the ribosomal stalk of the 50S ribosomal subunit. The N-terminus interacts with L11 and the large rRNA to form the base of the stalk. The C-terminus forms an elongated spine to which L12 dimers bind in a sequential fashion forming a multimeric L10(L12)X complex.

Functionally, forms part of the ribosomal stalk, playing a central role in the interaction of the ribosome with GTP-bound translation factors. This Anaeromyxobacter dehalogenans (strain 2CP-1 / ATCC BAA-258) protein is Large ribosomal subunit protein uL10.